A 791-amino-acid chain; its full sequence is Endonuclease MutS2 (791 aa).

An ATP-binding site is contributed by 337 to 344 (GPNTGGKT). The segment at 689–715 (AAQASQKKPEKSVRSSRGLRSSRASSE) is disordered. A compositionally biased stretch (low complexity) spans 703–713 (SSRGLRSSRAS). The Smr domain maps to 716–791 (LDLRGQRYEE…GTGATIVNLQ (76 aa)).

The protein belongs to the DNA mismatch repair MutS family. MutS2 subfamily. In terms of assembly, homodimer. Binds to stalled ribosomes, contacting rRNA.

Functionally, endonuclease that is involved in the suppression of homologous recombination and thus may have a key role in the control of bacterial genetic diversity. Acts as a ribosome collision sensor, splitting the ribosome into its 2 subunits. Detects stalled/collided 70S ribosomes which it binds and splits by an ATP-hydrolysis driven conformational change. Acts upstream of the ribosome quality control system (RQC), a ribosome-associated complex that mediates the extraction of incompletely synthesized nascent chains from stalled ribosomes and their subsequent degradation. Probably generates substrates for RQC. The polypeptide is Endonuclease MutS2 (Lactobacillus gasseri (strain ATCC 33323 / DSM 20243 / BCRC 14619 / CIP 102991 / JCM 1131 / KCTC 3163 / NCIMB 11718 / NCTC 13722 / AM63)).